Reading from the N-terminus, the 315-residue chain is Ribosomal RNA small subunit methyltransferase H (315 aa).

S-adenosyl-L-methionine-binding positions include 37–39 (AGH), Asp57, Tyr84, Asp105, and Gln112.

Belongs to the methyltransferase superfamily. RsmH family.

It is found in the cytoplasm. It catalyses the reaction cytidine(1402) in 16S rRNA + S-adenosyl-L-methionine = N(4)-methylcytidine(1402) in 16S rRNA + S-adenosyl-L-homocysteine + H(+). Functionally, specifically methylates the N4 position of cytidine in position 1402 (C1402) of 16S rRNA. This chain is Ribosomal RNA small subunit methyltransferase H, found in Lachnospira eligens (strain ATCC 27750 / DSM 3376 / VPI C15-48 / C15-B4) (Eubacterium eligens).